The primary structure comprises 292 residues: Ribosomal RNA small subunit methyltransferase A (292 aa).

S-adenosyl-L-methionine contacts are provided by Asn28, Leu30, Gly55, Glu76, Asp101, and Asn126.

The protein belongs to the class I-like SAM-binding methyltransferase superfamily. rRNA adenine N(6)-methyltransferase family. RsmA subfamily.

The protein localises to the cytoplasm. It catalyses the reaction adenosine(1518)/adenosine(1519) in 16S rRNA + 4 S-adenosyl-L-methionine = N(6)-dimethyladenosine(1518)/N(6)-dimethyladenosine(1519) in 16S rRNA + 4 S-adenosyl-L-homocysteine + 4 H(+). In terms of biological role, specifically dimethylates two adjacent adenosines (A1518 and A1519) in the loop of a conserved hairpin near the 3'-end of 16S rRNA in the 30S particle. May play a critical role in biogenesis of 30S subunits. This Bacillus anthracis protein is Ribosomal RNA small subunit methyltransferase A.